A 1403-amino-acid polypeptide reads, in one-letter code: DNA-directed RNA polymerase subunit beta' (1403 aa).

Positions 69, 71, 84, and 87 each coordinate Zn(2+). The Mg(2+) site is built by Asp-461, Asp-463, and Asp-465. Residues Cys-818, Cys-891, Cys-898, and Cys-901 each contribute to the Zn(2+) site. The segment at 1384-1403 is disordered; that stretch reads LELLRNEGEDETGNEELVAE. Residues 1391–1403 show a composition bias toward acidic residues; it reads GEDETGNEELVAE.

Belongs to the RNA polymerase beta' chain family. As to quaternary structure, the RNAP catalytic core consists of 2 alpha, 1 beta, 1 beta' and 1 omega subunit. When a sigma factor is associated with the core the holoenzyme is formed, which can initiate transcription. It depends on Mg(2+) as a cofactor. The cofactor is Zn(2+).

The enzyme catalyses RNA(n) + a ribonucleoside 5'-triphosphate = RNA(n+1) + diphosphate. In terms of biological role, DNA-dependent RNA polymerase catalyzes the transcription of DNA into RNA using the four ribonucleoside triphosphates as substrates. This chain is DNA-directed RNA polymerase subunit beta', found in Koribacter versatilis (strain Ellin345).